Here is a 464-residue protein sequence, read N- to C-terminus: Phosphoglucosamine mutase (464 aa).

The active-site Phosphoserine intermediate is Ser112. 4 residues coordinate Mg(2+): Ser112, Asp252, Asp254, and Asp256. Ser112 carries the post-translational modification Phosphoserine.

This sequence belongs to the phosphohexose mutase family. The cofactor is Mg(2+). Post-translationally, activated by phosphorylation.

It catalyses the reaction alpha-D-glucosamine 1-phosphate = D-glucosamine 6-phosphate. Catalyzes the conversion of glucosamine-6-phosphate to glucosamine-1-phosphate. This chain is Phosphoglucosamine mutase, found in Synechococcus sp. (strain CC9902).